We begin with the raw amino-acid sequence, 173 residues long: Protein GrpE (173 aa).

This sequence belongs to the GrpE family. In terms of assembly, homodimer.

It localises to the cytoplasm. In terms of biological role, participates actively in the response to hyperosmotic and heat shock by preventing the aggregation of stress-denatured proteins, in association with DnaK and GrpE. It is the nucleotide exchange factor for DnaK and may function as a thermosensor. Unfolded proteins bind initially to DnaJ; upon interaction with the DnaJ-bound protein, DnaK hydrolyzes its bound ATP, resulting in the formation of a stable complex. GrpE releases ADP from DnaK; ATP binding to DnaK triggers the release of the substrate protein, thus completing the reaction cycle. Several rounds of ATP-dependent interactions between DnaJ, DnaK and GrpE are required for fully efficient folding. The protein is Protein GrpE of Campylobacter fetus subsp. fetus (strain 82-40).